The following is a 252-amino-acid chain: Indole-3-glycerol phosphate synthase (252 aa).

This sequence belongs to the TrpC family.

It catalyses the reaction 1-(2-carboxyphenylamino)-1-deoxy-D-ribulose 5-phosphate + H(+) = (1S,2R)-1-C-(indol-3-yl)glycerol 3-phosphate + CO2 + H2O. It functions in the pathway amino-acid biosynthesis; L-tryptophan biosynthesis; L-tryptophan from chorismate: step 4/5. The chain is Indole-3-glycerol phosphate synthase from Listeria monocytogenes serotype 4b (strain CLIP80459).